The following is a 355-amino-acid chain: Thiamine thiazole synthase, chloroplastic (355 aa).

A chloroplast-targeting transit peptide spans 1–42; the sequence is MAAMATTASSLLKTSFAGARLPAAARNPTVSVAPRTGGAICN. Residues alanine 96, 116–117, glycine 124, and valine 189 each bind substrate; that span reads EQ. 2,3-didehydroalanine (Cys) is present on cysteine 218. Substrate contacts are provided by residues aspartate 220, histidine 235, methionine 287, and 297 to 299; that span reads RMG.

It belongs to the THI4 family. As to quaternary structure, homooctamer. It depends on Fe cation as a cofactor. Post-translationally, during the catalytic reaction, a sulfide is transferred from Cys-218 to a reaction intermediate, generating a dehydroalanine residue.

It localises to the plastid. It is found in the chloroplast. The catalysed reaction is [ADP-thiazole synthase]-L-cysteine + glycine + NAD(+) = [ADP-thiazole synthase]-dehydroalanine + ADP-5-ethyl-4-methylthiazole-2-carboxylate + nicotinamide + 3 H2O + 2 H(+). Its function is as follows. Involved in biosynthesis of the thiamine precursor thiazole. Catalyzes the conversion of NAD and glycine to adenosine diphosphate 5-(2-hydroxyethyl)-4-methylthiazole-2-carboxylic acid (ADT), an adenylated thiazole intermediate. The reaction includes an iron-dependent sulfide transfer from a conserved cysteine residue of the protein to a thiazole intermediate. The enzyme can only undergo a single turnover, which suggests it is a suicide enzyme. May have additional roles in adaptation to various stress conditions and in DNA damage tolerance. Required fot thiamine accumulation and disease resistance toward the bacterial pathogen Xanthomonas oryzae pv oryzae (Xoo) and the fungal pathogen Magnaporthe oryzae. During infection by Xoo, functions positively in the defense pathway initiated by the resistance genes XA3 and XA26 by promoting thiamine synthesis. May function upstream of the defense-related proteins peroxidases, phenylalanine ammonia-lyases and pathogenesis-related proteins. (Microbial infection) During infection by Xanthomonas oryzae pv oryzae (Xoo), THI1 interacts with the type III effector virulence factor xadA from Xoo, which is an adhesin-like outer membrane protein. This probably attenuates the function of THI1 in defense response. This is Thiamine thiazole synthase, chloroplastic from Oryza sativa subsp. japonica (Rice).